A 336-amino-acid chain; its full sequence is CST complex subunit STN1 (336 aa).

A DNA-binding region (OB) is located at residues V49–V126. Winged helix-turn-helix (wHTH) stretches follow at residues Q162–D263 and H264–F336.

The protein belongs to the CTC1 family. As to quaternary structure, component of the CST complex.

The protein resides in the nucleus. It localises to the chromosome. It is found in the telomere. In terms of biological role, component of the CST complex proposed to act as a specialized replication factor promoting DNA replication under conditions of replication stress or natural replication barriers such as the telomere duplex. The CST complex binds single-stranded DNA with high affinity in a sequence-independent manner, while isolated subunits bind DNA with low affinity by themselves. Initially the CST complex has been proposed to protect telomeres from DNA degradation. However, the CST complex has been shown to be involved in several aspects of telomere replication. The polypeptide is CST complex subunit STN1 (Aquarana catesbeiana (American bullfrog)).